The sequence spans 307 residues: Cyclin-dependent kinase 5 activator 1 (307 aa).

A lipid anchor (N-myristoyl glycine) is attached at Gly2. Ser8 carries the post-translational modification Phosphoserine; by CDK5. The tract at residues 97 to 133 (TFAQPPPAQPPAPPASQLSGSQTGVSSSVKKAPHPAI) is disordered. The span at 100–110 (QPPPAQPPAPP) shows a compositional bias: pro residues. The span at 112-125 (SQLSGSQTGVSSSV) shows a compositional bias: polar residues. At Thr138 the chain carries Phosphothreonine; by CDK5.

This sequence belongs to the cyclin-dependent kinase 5 activator family. Heterodimer composed of a catalytic subunit CDK5 and a regulatory subunit CDK5R1 (p25) and macromolecular complex composed of at least CDK5, CDK5R1 (p35) and CDK5RAP1 or CDK5RAP2 or CDK5RAP3. Only the heterodimer shows kinase activity. Interacts with EPHA4 and NGEF; may mediate the activation of NGEF by EPHA4. Interacts with RASGRF2. The complex p35/CDK5 interacts with CLOCK. In terms of processing, the p35 form is proteolytically cleaved by calpain, giving rise to the p25 form. P35 has a 5 to 10 fold shorter half-life compared to p25. The conversion results in deregulation of the CDK5 kinase: p25/CDK5 kinase displays an increased and altered tau phosphorylation in comparison to the p35/CDK5 kinase in vivo. Post-translationally, myristoylated. A proper myristoylation signal is essential for the proper distribution of p35. Phosphorylation at Ser-8 and Thr-138 by CDK5 prevents calpain-mediated proteolysis. In terms of processing, ubiquitinated, leading to its degradation: degradation of p35 by proteasome results in down-regulation of CDK5 activity. During this process, CDK5 phosphorylates p35 and induces its ubiquitination and subsequent degradation. Ubiquitinated by the CRL2(FEM1B) complex, which recognizes the -Gly-Leu-Asp-Arg C-degron at the C-terminus, leading to its degradation. Brain and neuron specific.

The protein resides in the cell membrane. It localises to the cell projection. Its subcellular location is the neuron projection. The protein localises to the nucleus. It is found in the cytoplasm. The protein resides in the perinuclear region. It localises to the perikaryon. In terms of biological role, p35 is a neuron specific activator of CDK5. The complex p35/CDK5 is required for neurite outgrowth and cortical lamination. Involved in dendritic spine morphogenesis by mediating the EFNA1-EPHA4 signaling. Activator of TPKII. The complex p35/CDK5 participates in the regulation of the circadian clock by modulating the function of CLOCK protein: phosphorylates CLOCK at 'Thr-451' and 'Thr-461' and regulates the transcriptional activity of the CLOCK-BMAL1 heterodimer in association with altered stability and subcellular distribution. In Rattus norvegicus (Rat), this protein is Cyclin-dependent kinase 5 activator 1 (Cdk5r1).